A 361-amino-acid chain; its full sequence is Peptide chain release factor 1 (361 aa).

Position 236 is an N5-methylglutamine (Q236). Residues 285–309 show a composition bias toward basic and acidic residues; the sequence is NAKDSARAADRKAQVGSGDRSERIR. The disordered stretch occupies residues 285-312; the sequence is NAKDSARAADRKAQVGSGDRSERIRTYN.

It belongs to the prokaryotic/mitochondrial release factor family. Post-translationally, methylated by PrmC. Methylation increases the termination efficiency of RF1.

The protein localises to the cytoplasm. Peptide chain release factor 1 directs the termination of translation in response to the peptide chain termination codons UAG and UAA. This is Peptide chain release factor 1 from Methylobacterium radiotolerans (strain ATCC 27329 / DSM 1819 / JCM 2831 / NBRC 15690 / NCIMB 10815 / 0-1).